The sequence spans 574 residues: Galactose transporter (574 aa).

The disordered stretch occupies residues 1 to 57 (MAVEENNMPVVSQQPQAGEDVISSLSKDSHLSAQSQKYSNDELKAGESGSEGSQSVP). The Cytoplasmic segment spans residues 1-70 (MAVEENNMPV…PKKPMSEYVT (70 aa)). Residues 23–38 (SSLSKDSHLSAQSQKY) are compositionally biased toward polar residues. A phosphoserine mark is found at serine 32, serine 35, serine 39, serine 48, serine 50, serine 53, and serine 55. A helical membrane pass occupies residues 71 to 91 (VSLLCLCVAFGGFMFGWDTGT). Topologically, residues 92–121 (ISGFVVQTDFLRRFGMKHKDGTHYLSNVRT) are extracellular. The chain crosses the membrane as a helical span at residues 122–142 (GLIVAIFNIGCAFGGIILSKG). At 143–149 (GDMYGRK) the chain is on the cytoplasmic side. A helical transmembrane segment spans residues 150–170 (KGLSIVVSVYIVGIIIQIASI). Over 171-175 (NKWYQ) the chain is Extracellular. The chain crosses the membrane as a helical span at residues 176–196 (YFIGRIISGLGVGGIAVLCPM). Residues 197-207 (LISEIAPKHLR) lie on the Cytoplasmic side of the membrane. Residues 208–228 (GTLVSCYQLMITAGIFLGYCT) traverse the membrane as a helical segment. At 229 to 242 (NYGTKSYSNSVQWR) the chain is on the extracellular side. A helical transmembrane segment spans residues 243-263 (VPLGLCFAWSLFMIGALTLVP). At 264–342 (ESPRYLCEVN…MGVFVQMFQQ (79 aa)) the chain is on the cytoplasmic side. Residues 343–362 (LTGNNYFFYYGTVIFKSVGL) form a helical membrane-spanning segment. At 363 to 366 (DDSF) the chain is on the extracellular side. The helical transmembrane segment at 367 to 387 (ETSIVIGVVNFASTFFSLWTV) threads the bilayer. Residues 388 to 394 (ENLGHRK) lie on the Cytoplasmic side of the membrane. The chain crosses the membrane as a helical span at residues 395 to 415 (CLLLGAATMMACMVIYASVGV). The Extracellular portion of the chain corresponds to 416–435 (TRLYPHGKSQPSSKGAGNCM). Residues 436-456 (IVFTCFYIFCYATTWAPVAWV) form a helical membrane-spanning segment. Topologically, residues 457–472 (ITAESFPLRVKSKCMA) are cytoplasmic. A helical transmembrane segment spans residues 473 to 493 (LASASNWVWGFLIAFFTPFIT). Topologically, residues 494-499 (SAINFY) are extracellular. Residues 500–520 (YGYVFMGCLVAMFFYVFFFVP) form a helical membrane-spanning segment. Topologically, residues 521–574 (ETKGLSLEEIQELWEEGVLPWKSEGWIPSSRRGNNYDLEDLQHDDKPWYKAMLE) are cytoplasmic.

This sequence belongs to the major facilitator superfamily. Sugar transporter (TC 2.A.1.1) family.

The protein localises to the membrane. Functionally, GAL2 is a facilitated diffusion transporter required for both the high-affinity galactokinase-dependent and low-affinity galactokinase-independent galactose transport processes. This is Galactose transporter (GAL2) from Saccharomyces cerevisiae (strain ATCC 204508 / S288c) (Baker's yeast).